A 430-amino-acid polypeptide reads, in one-letter code: Serine--tRNA ligase (430 aa).

236–238 (TAE) lines the L-serine pocket. Position 267–269 (267–269 (RSE)) interacts with ATP. Glu-290 provides a ligand contact to L-serine. 354 to 357 (EISS) serves as a coordination point for ATP. Ser-390 is a binding site for L-serine.

Belongs to the class-II aminoacyl-tRNA synthetase family. Type-1 seryl-tRNA synthetase subfamily. Homodimer. The tRNA molecule binds across the dimer.

Its subcellular location is the cytoplasm. It carries out the reaction tRNA(Ser) + L-serine + ATP = L-seryl-tRNA(Ser) + AMP + diphosphate + H(+). It catalyses the reaction tRNA(Sec) + L-serine + ATP = L-seryl-tRNA(Sec) + AMP + diphosphate + H(+). Its pathway is aminoacyl-tRNA biosynthesis; selenocysteinyl-tRNA(Sec) biosynthesis; L-seryl-tRNA(Sec) from L-serine and tRNA(Sec): step 1/1. Its function is as follows. Catalyzes the attachment of serine to tRNA(Ser). Is also able to aminoacylate tRNA(Sec) with serine, to form the misacylated tRNA L-seryl-tRNA(Sec), which will be further converted into selenocysteinyl-tRNA(Sec). The polypeptide is Serine--tRNA ligase (Idiomarina loihiensis (strain ATCC BAA-735 / DSM 15497 / L2-TR)).